A 225-amino-acid polypeptide reads, in one-letter code: uncharacterized protein (225 aa).

Residues 2–22 (TIFYLVFIAVIIIIILYVLYL) form a helical membrane-spanning segment. Residue Asn73 is glycosylated (N-linked (GlcNAc...) asparagine; by host). Residues 114-146 (DYEDNYFNSNWNLKQLKNQLENLLREKNYKMVL) adopt a coiled-coil conformation. An N-linked (GlcNAc...) asparagine; by host glycan is attached at Asn222.

The protein resides in the membrane. This is an uncharacterized protein from Acanthamoeba polyphaga (Amoeba).